Reading from the N-terminus, the 310-residue chain is Ribosomal RNA small subunit methyltransferase H (310 aa).

Residues Ala-32 to His-34, Asp-52, Phe-79, Asp-100, and Gln-107 each bind S-adenosyl-L-methionine.

Belongs to the methyltransferase superfamily. RsmH family.

It localises to the cytoplasm. It catalyses the reaction cytidine(1402) in 16S rRNA + S-adenosyl-L-methionine = N(4)-methylcytidine(1402) in 16S rRNA + S-adenosyl-L-homocysteine + H(+). Its function is as follows. Specifically methylates the N4 position of cytidine in position 1402 (C1402) of 16S rRNA. The protein is Ribosomal RNA small subunit methyltransferase H of Bacillus pumilus (strain SAFR-032).